The chain runs to 186 residues: Ribosome-recycling factor (186 aa).

It belongs to the RRF family.

The protein localises to the cytoplasm. In terms of biological role, responsible for the release of ribosomes from messenger RNA at the termination of protein biosynthesis. May increase the efficiency of translation by recycling ribosomes from one round of translation to another. The protein is Ribosome-recycling factor of Paracidovorax citrulli (strain AAC00-1) (Acidovorax citrulli).